The sequence spans 141 residues: Small ribosomal subunit protein bS16 (141 aa).

Composition is skewed to polar residues over residues Asn-89–Ile-101 and Ala-109–Ile-129. The interval Asn-89–Ser-141 is disordered.

It belongs to the bacterial ribosomal protein bS16 family.

The chain is Small ribosomal subunit protein bS16 from Trichodesmium erythraeum (strain IMS101).